An 802-amino-acid chain; its full sequence is Post-transcriptional regulator mkt1 (802 aa).

3 positions are modified to phosphoserine: serine 227, serine 228, and serine 230.

This sequence belongs to the XPG/RAD2 endonuclease family. As to quaternary structure, interacts with pab1 binding protein ath1.

Its function is as follows. Involved in post-transcriptional regulation of gene expression by 3'-UTR-mediated RNA regulation. Promotes interactions between mRNA and poly(A)-binding protein. Binds the 3' UTR of mRNAs, centromeric transcripts and antisense-rDNA. Required for the establishment but not the maintenance of heterochromatin at pericentromeres, and for the maintenance of small domains of facultative heterochromatin known as HOODs. The polypeptide is Post-transcriptional regulator mkt1 (Schizosaccharomyces pombe (strain 972 / ATCC 24843) (Fission yeast)).